We begin with the raw amino-acid sequence, 245 residues long: 1-(5-phosphoribosyl)-5-[(5-phosphoribosylamino)methylideneamino] imidazole-4-carboxamide isomerase (245 aa).

The active-site Proton acceptor is the D8. D129 (proton donor) is an active-site residue.

The protein belongs to the HisA/HisF family.

The protein localises to the cytoplasm. It carries out the reaction 1-(5-phospho-beta-D-ribosyl)-5-[(5-phospho-beta-D-ribosylamino)methylideneamino]imidazole-4-carboxamide = 5-[(5-phospho-1-deoxy-D-ribulos-1-ylimino)methylamino]-1-(5-phospho-beta-D-ribosyl)imidazole-4-carboxamide. It participates in amino-acid biosynthesis; L-histidine biosynthesis; L-histidine from 5-phospho-alpha-D-ribose 1-diphosphate: step 4/9. The polypeptide is 1-(5-phosphoribosyl)-5-[(5-phosphoribosylamino)methylideneamino] imidazole-4-carboxamide isomerase (Sinorhizobium fredii (strain NBRC 101917 / NGR234)).